Here is a 491-residue protein sequence, read N- to C-terminus: Sucrose transport protein SUC9 (491 aa).

The segment covering 1 to 12 has biased composition (basic and acidic residues); sequence MSDIQAKEDAAP. The segment at 1–26 is disordered; that stretch reads MSDIQAKEDAAPVDRQSSSSVVVPDE. The Cytoplasmic portion of the chain corresponds to 1-33; it reads MSDIQAKEDAAPVDRQSSSSVVVPDEPSPLRKM. Ser17 carries the phosphoserine modification. Residues 34-54 traverse the membrane as a helical segment; that stretch reads ISVASIAAGIQFGWALQLSLL. Topologically, residues 55-68 are extracellular; it reads TPYVQLLGVPHKWS. A helical transmembrane segment spans residues 69–89; the sequence is SFIWLCGPISGLLVQPTVGYF. Topologically, residues 90–101 are cytoplasmic; that stretch reads SDRCKSRFGRRR. A helical transmembrane segment spans residues 102–122; that stretch reads PFIATGALLVALAVILIGFAA. The Extracellular segment spans residues 123-139; that stretch reads DFGHTMGDKLDEAVKIR. Residues 140–160 traverse the membrane as a helical segment; that stretch reads AVGFFVVGFWILDVANNTLQG. At 161 to 181 the chain is on the cytoplasmic side; that stretch reads PCRAFLGDLAAGDAKKTRTAN. Residues 182-202 traverse the membrane as a helical segment; that stretch reads AIFSFFMAVGNVLGYAAGSYT. Topologically, residues 203-224 are extracellular; that stretch reads NLHKIFPFTVTKACDIYCANLK. A helical membrane pass occupies residues 225-245; the sequence is SCFIISITLLIVLTIIALWYV. At 246 to 277 the chain is on the cytoplasmic side; sequence EDKQWSPNADSDNEKTPFFGEIFGAFKVMKRP. The helical transmembrane segment at 278–298 threads the bilayer; that stretch reads MWMLLAVTALNWIAWFPFLLY. Over 299–329 the chain is Extracellular; it reads DTDWMGREVYGGDSAGDDKMKKLYNHGIQVG. A helical membrane pass occupies residues 330–350; it reads SLGLMLNSIVLGVMSLVIGVI. The Cytoplasmic segment spans residues 351 to 358; it reads SKKIGAKR. Residues 359–379 traverse the membrane as a helical segment; that stretch reads LWGAVNIILAVCLAMTVLVTK. Residues 380-406 are Extracellular-facing; that stretch reads KAEEHRKIAGRMALPTNAIRDGALSLF. Residues 407–427 traverse the membrane as a helical segment; sequence AILGIPLAITFSIPFALASII. The Cytoplasmic portion of the chain corresponds to 428–443; the sequence is SSSSGAGQGLSLGVLN. The chain crosses the membrane as a helical span at residues 444–464; it reads MAIVIPQMIVSFGVGPIDALF. Residues 465–468 lie on the Extracellular side of the membrane; that stretch reads GGGN. The chain crosses the membrane as a helical span at residues 469 to 489; the sequence is LPGFVVGAIAALISSVVALTV. The Cytoplasmic segment spans residues 490–491; that stretch reads LP.

This sequence belongs to the glycoside-pentoside-hexuronide (GPH) cation symporter transporter (TC 2.A.2.4) family. As to expression, widely expressed.

It localises to the cell membrane. The enzyme catalyses sucrose(out) + H(+)(out) = sucrose(in) + H(+)(in). Its pathway is glycan biosynthesis; sucrose metabolism. With respect to regulation, inhibited by protonophores (e.g. carbonyl cyanide m-chlorophenyl-hydrazone (CCCP)) and SH group inhibitors (e.g. p-chloromercuribenzene sulphonic acid (PCMBS)). In terms of biological role, high-affinity sucrose transporter. Responsible for the transport of sucrose into the cell, with the concomitant uptake of protons (symport system). Can also transport a wide range of glucosides, such as helicin, salicin, arbutin, maltose, fraxin, esculin, uranose, alpha-methylglucoside, alpha-phenylglucoside and beta-phenylglucoside. Plays a role in flowering time transition delay. In Arabidopsis thaliana (Mouse-ear cress), this protein is Sucrose transport protein SUC9.